A 194-amino-acid chain; its full sequence is HTH-type transcriptional regulator BetI (194 aa).

The region spanning 8–68 is the HTH tetR-type domain; that stretch reads EIRRAQLIDA…ATMRHVLRDL (61 aa). The H-T-H motif DNA-binding region spans 31–50; sequence TLASVAQRANISTGIVSHYF.

It participates in amine and polyamine biosynthesis; betaine biosynthesis via choline pathway [regulation]. Repressor involved in the biosynthesis of the osmoprotectant glycine betaine. It represses transcription of the choline transporter BetT and the genes of BetAB involved in the synthesis of glycine betaine. In Burkholderia cenocepacia (strain HI2424), this protein is HTH-type transcriptional regulator BetI.